The chain runs to 468 residues: ATP synthase subunit beta (468 aa).

148 to 155 provides a ligand contact to ATP; the sequence is GGAGVGKT.

The protein belongs to the ATPase alpha/beta chains family. In terms of assembly, F-type ATPases have 2 components, CF(1) - the catalytic core - and CF(0) - the membrane proton channel. CF(1) has five subunits: alpha(3), beta(3), gamma(1), delta(1), epsilon(1). CF(0) has three main subunits: a(1), b(2) and c(9-12). The alpha and beta chains form an alternating ring which encloses part of the gamma chain. CF(1) is attached to CF(0) by a central stalk formed by the gamma and epsilon chains, while a peripheral stalk is formed by the delta and b chains.

It localises to the cell inner membrane. The catalysed reaction is ATP + H2O + 4 H(+)(in) = ADP + phosphate + 5 H(+)(out). Its function is as follows. Produces ATP from ADP in the presence of a proton gradient across the membrane. The catalytic sites are hosted primarily by the beta subunits. The polypeptide is ATP synthase subunit beta (Stenotrophomonas maltophilia (strain R551-3)).